The chain runs to 294 residues: Cytidine deaminase (294 aa).

2 consecutive CMP/dCMP-type deaminase domains span residues 48–168 and 186–294; these read DEDA…FGPK and LTGD…VLLG. Substrate is bound at residue 89–91; it reads NME. His-102 provides a ligand contact to Zn(2+). The active-site Proton donor is Glu-104. The Zn(2+) site is built by Cys-129 and Cys-132.

This sequence belongs to the cytidine and deoxycytidylate deaminase family. Homodimer. It depends on Zn(2+) as a cofactor.

The enzyme catalyses cytidine + H2O + H(+) = uridine + NH4(+). It carries out the reaction 2'-deoxycytidine + H2O + H(+) = 2'-deoxyuridine + NH4(+). In terms of biological role, this enzyme scavenges exogenous and endogenous cytidine and 2'-deoxycytidine for UMP synthesis. This chain is Cytidine deaminase, found in Salmonella agona (strain SL483).